Consider the following 87-residue polypeptide: Small ribosomal subunit protein uS17 (87 aa).

Belongs to the universal ribosomal protein uS17 family. Part of the 30S ribosomal subunit.

One of the primary rRNA binding proteins, it binds specifically to the 5'-end of 16S ribosomal RNA. The chain is Small ribosomal subunit protein uS17 from Cytophaga hutchinsonii (strain ATCC 33406 / DSM 1761 / CIP 103989 / NBRC 15051 / NCIMB 9469 / D465).